The chain runs to 503 residues: uncharacterized protein (503 aa).

Basic and acidic residues-rich tracts occupy residues 1 to 23 (MAHE…EKVR) and 203 to 215 (PLEK…RSDQ). Disordered regions lie at residues 1 to 29 (MAHE…TVPV) and 149 to 227 (ETFQ…SNSS). Phosphoserine is present on residues serine 239 and serine 243. 2 disordered regions span residues 346 to 370 (LDPA…GAKW) and 450 to 475 (LLSS…GAPK). Residues 347–356 (DPARLPRPDM) are compositionally biased toward basic and acidic residues.

This is an uncharacterized protein from Bos taurus (Bovine).